Consider the following 726-residue polypeptide: DNA ligase (726 aa).

NAD(+) is bound by residues 34 to 38 (DAEYD), 83 to 84 (SL), and glutamate 115. Lysine 117 (N6-AMP-lysine intermediate) is an active-site residue. Positions 138, 190, 306, and 330 each coordinate NAD(+). Residues cysteine 424, cysteine 427, cysteine 442, and cysteine 448 each contribute to the Zn(2+) site. Residues 608-698 (SRGNALAGKT…RTADDQATPA (91 aa)) form the BRCT domain. Positions 690-726 (TADDQATPASDRRAATASVPPSDDAPGSPRQLDFDLT) are disordered.

It belongs to the NAD-dependent DNA ligase family. LigA subfamily. Mg(2+) serves as cofactor. The cofactor is Mn(2+).

The enzyme catalyses NAD(+) + (deoxyribonucleotide)n-3'-hydroxyl + 5'-phospho-(deoxyribonucleotide)m = (deoxyribonucleotide)n+m + AMP + beta-nicotinamide D-nucleotide.. Its function is as follows. DNA ligase that catalyzes the formation of phosphodiester linkages between 5'-phosphoryl and 3'-hydroxyl groups in double-stranded DNA using NAD as a coenzyme and as the energy source for the reaction. It is essential for DNA replication and repair of damaged DNA. The chain is DNA ligase from Roseiflexus sp. (strain RS-1).